Here is a 414-residue protein sequence, read N- to C-terminus: Isocitrate dehydrogenase [NADP] cytoplasmic (414 aa).

S2 is subject to N-acetylserine. Y42 is subject to Phosphotyrosine. Position 75–77 (75–77 (TIT)) interacts with NADP(+). T77 lines the substrate pocket. K81 is modified (N6-acetyllysine). Position 82 (R82) interacts with NADP(+). Substrate-binding positions include 94–100 (SPNGTIR) and R109. K126 bears the N6-succinyllysine mark. Positions 132 and 212 each coordinate substrate. Residues K224 and K233 each carry the N6-acetyllysine modification. D252 lines the Mn(2+) pocket. An NADP(+)-binding site is contributed by K260. Mn(2+) contacts are provided by D275 and D279. NADP(+) is bound at residue 310–315 (GTVTRH). Position 321 is an N6-acetyllysine (K321). N328 lines the NADP(+) pocket. The residue at position 389 (S389) is a Phosphoserine. At K400 the chain carries N6-succinyllysine.

This sequence belongs to the isocitrate and isopropylmalate dehydrogenases family. In terms of assembly, homodimer. Mg(2+) serves as cofactor. The cofactor is Mn(2+). Post-translationally, acetylation at Lys-374 dramatically reduces catalytic activity.

The protein localises to the cytoplasm. The protein resides in the cytosol. It catalyses the reaction D-threo-isocitrate + NADP(+) = 2-oxoglutarate + CO2 + NADPH. Catalyzes the NADP(+)-dependent oxidative decarboxylation of isocitrate (D-threo-isocitrate) to 2-ketoglutarate (2-oxoglutarate), which is required by other enzymes such as the phytanoyl-CoA dioxygenase. Plays a critical role in the generation of NADPH, an important cofactor in many biosynthesis pathways. May act as a corneal epithelial crystallin and may be involved in maintaining corneal epithelial transparency. The polypeptide is Isocitrate dehydrogenase [NADP] cytoplasmic (IDH1) (Ovis aries (Sheep)).